The chain runs to 60 residues: MKNTILILFTAFIALLGFFGMSAEALADPIADPLAGPNAEADPEAIKWKAILDAVKKVIG.

The signal sequence occupies residues 1–27; it reads MKNTILILFTAFIALLGFFGMSAEALA. AXPX repeat units follow at residues 27-30, 31-34, 35-38, and 41-43; these read ADPI, ADPL, AGPN, and ADP. Positions 28–45 are excised as a propeptide; that stretch reads DPIADPLAGPNAEADPEA. Ile59 carries the post-translational modification Isoleucine amide.

It belongs to the MCD family. Mastoparan subfamily. In terms of tissue distribution, expressed by the venom gland.

The protein localises to the secreted. Its subcellular location is the target cell membrane. Antimicrobial and mast cell degranulating peptide. Has broad spectrum antibacterial activity against both Gram-positive and Gram-negative bacteria (S.aureus MIC=32-64 ug/ml, S.xylosus MIC=2 ug/ml, S.alactolyticus MIC=12 ug/ml, C.koseri MIC=4 ug/ml, E.coli MIC=8 ug/ml, K.pneumoniae MIC=32 ug/ml, P.aerugiosa MIC=192 ug/ml, S.choleraesuis MIC=32 ug/ml, S.typhimurium MIC=32 ug/ml, V.parahamelytics MIC=16 ug/ml). Affects membrane permeability of E.coli. Shows hemolytic activities on sheep, chicken and human erythrocytes. Its mast cell degranulation activity may be related to the activation of G-protein coupled receptors in mast cells as well as interaction with other proteins located in cell endosomal membranes in the mast cells. This chain is Mastoparan-A, found in Vespa analis (Yellow-vented hornet).